Here is a 322-residue protein sequence, read N- to C-terminus: tRNA dimethylallyltransferase (322 aa).

19–26 (GPTASGKT) serves as a coordination point for ATP. 21–26 (TASGKT) serves as a coordination point for substrate. Interaction with substrate tRNA regions lie at residues 44–47 (DSAL), 168–172 (QRIQR), and 255–260 (RCVGYR).

The protein belongs to the IPP transferase family. Monomer. It depends on Mg(2+) as a cofactor.

The enzyme catalyses adenosine(37) in tRNA + dimethylallyl diphosphate = N(6)-dimethylallyladenosine(37) in tRNA + diphosphate. Its function is as follows. Catalyzes the transfer of a dimethylallyl group onto the adenine at position 37 in tRNAs that read codons beginning with uridine, leading to the formation of N6-(dimethylallyl)adenosine (i(6)A). The sequence is that of tRNA dimethylallyltransferase from Cupriavidus taiwanensis (strain DSM 17343 / BCRC 17206 / CCUG 44338 / CIP 107171 / LMG 19424 / R1) (Ralstonia taiwanensis (strain LMG 19424)).